The sequence spans 308 residues: Putative S-adenosyl-L-methionine-dependent methyltransferase MAB_4585c (308 aa).

Residues D131 and 160–161 (DL) each bind S-adenosyl-L-methionine.

It belongs to the UPF0677 family.

Functionally, exhibits S-adenosyl-L-methionine-dependent methyltransferase activity. This Mycobacteroides abscessus (strain ATCC 19977 / DSM 44196 / CCUG 20993 / CIP 104536 / JCM 13569 / NCTC 13031 / TMC 1543 / L948) (Mycobacterium abscessus) protein is Putative S-adenosyl-L-methionine-dependent methyltransferase MAB_4585c.